We begin with the raw amino-acid sequence, 352 residues long: tRNA pseudouridine synthase D (352 aa).

Asp-81 functions as the Nucleophile in the catalytic mechanism. Residues 157 to 303 (GIPNYFGVQR…MEHERRILRL (147 aa)) enclose the TRUD domain.

It belongs to the pseudouridine synthase TruD family.

The catalysed reaction is uridine(13) in tRNA = pseudouridine(13) in tRNA. Responsible for synthesis of pseudouridine from uracil-13 in transfer RNAs. The chain is tRNA pseudouridine synthase D from Pseudomonas syringae pv. tomato (strain ATCC BAA-871 / DC3000).